The following is a 758-amino-acid chain: Probable ubiquitin carboxyl-terminal hydrolase creB (758 aa).

The segment at 1-27 is disordered; sequence MGSFLRSFRRDVGSSTPSVGATPAKKE. The 412-residue stretch at 57-468 folds into the USP domain; that stretch reads FGMENYGNTC…CAYVLFYQET (412 aa). Cys-66 acts as the Nucleophile in catalysis. 2 disordered regions span residues 116–148 and 243–268; these read AEAQ…DSSE and QPIP…SKTP. Residues 253–268 show a composition bias toward polar residues; sequence TTDSSRQSISSGSKTP. The active-site Proton acceptor is His-419. Residues 514 to 744 form a disordered region; that stretch reads IPVQDEPQRH…KGDRAGHGKW (231 aa). Positions 554 to 563 are enriched in pro residues; it reads ATPPPVPPIP. Residues 573-631 are a coiled coil; that stretch reads KKSDIQSKKERAKEEKERKAAEKEMEKQRRKEQEARVKENQRREEAELKAALEASKASK. Basic and acidic residues-rich tracts occupy residues 573 to 650 and 729 to 740; these read KKSD…DPKR and DALKSPKGDRAG.

Belongs to the peptidase C19 family. In terms of assembly, interacts with creA, creC and qutD.

It catalyses the reaction Thiol-dependent hydrolysis of ester, thioester, amide, peptide and isopeptide bonds formed by the C-terminal Gly of ubiquitin (a 76-residue protein attached to proteins as an intracellular targeting signal).. Ubiquitin thioesterase component of the regulatory network controlling carbon source utilization through ubiquitination and deubiquitination involving creA, creB, creC, creD and acrB. Deubiquitinates the creA catabolic repressor and the quinate permease qutD. Also plays a role in response to carbon starvation and the control of extracellular proteases activity. The sequence is that of Probable ubiquitin carboxyl-terminal hydrolase creB (creB) from Aspergillus niger (strain ATCC MYA-4892 / CBS 513.88 / FGSC A1513).